Here is a 273-residue protein sequence, read N- to C-terminus: Putative phosphoenolpyruvate synthase regulatory protein (273 aa).

153–160 (AVSRAGKT) provides a ligand contact to ADP.

Belongs to the pyruvate, phosphate/water dikinase regulatory protein family. PSRP subfamily.

The catalysed reaction is [pyruvate, water dikinase] + ADP = [pyruvate, water dikinase]-phosphate + AMP + H(+). It carries out the reaction [pyruvate, water dikinase]-phosphate + phosphate + H(+) = [pyruvate, water dikinase] + diphosphate. Functionally, bifunctional serine/threonine kinase and phosphorylase involved in the regulation of the phosphoenolpyruvate synthase (PEPS) by catalyzing its phosphorylation/dephosphorylation. This Stenotrophomonas maltophilia (strain K279a) protein is Putative phosphoenolpyruvate synthase regulatory protein.